A 100-amino-acid chain; its full sequence is Urease subunit gamma (100 aa).

The protein belongs to the urease gamma subunit family. In terms of assembly, heterotrimer of UreA (gamma), UreB (beta) and UreC (alpha) subunits. Three heterotrimers associate to form the active enzyme.

Its subcellular location is the cytoplasm. It carries out the reaction urea + 2 H2O + H(+) = hydrogencarbonate + 2 NH4(+). It functions in the pathway nitrogen metabolism; urea degradation; CO(2) and NH(3) from urea (urease route): step 1/1. The protein is Urease subunit gamma of Pseudomonas syringae pv. tomato (strain ATCC BAA-871 / DC3000).